We begin with the raw amino-acid sequence, 116 residues long: Large ribosomal subunit protein bL19 (116 aa).

It belongs to the bacterial ribosomal protein bL19 family.

Functionally, this protein is located at the 30S-50S ribosomal subunit interface and may play a role in the structure and function of the aminoacyl-tRNA binding site. This is Large ribosomal subunit protein bL19 from Pseudomonas fluorescens (strain ATCC BAA-477 / NRRL B-23932 / Pf-5).